Reading from the N-terminus, the 188-residue chain is Elongation factor P (188 aa).

This sequence belongs to the elongation factor P family.

The protein resides in the cytoplasm. It participates in protein biosynthesis; polypeptide chain elongation. Involved in peptide bond synthesis. Stimulates efficient translation and peptide-bond synthesis on native or reconstituted 70S ribosomes in vitro. Probably functions indirectly by altering the affinity of the ribosome for aminoacyl-tRNA, thus increasing their reactivity as acceptors for peptidyl transferase. The sequence is that of Elongation factor P from Gemmatimonas aurantiaca (strain DSM 14586 / JCM 11422 / NBRC 100505 / T-27).